A 457-amino-acid polypeptide reads, in one-letter code: UDP-glycosyltransferase 72C1 (457 aa).

Residues S272, 343-344 (WA), 361-369 (HCGWNSVLE), and 383-386 (YSEQ) contribute to the UDP-alpha-D-glucose site.

Belongs to the UDP-glycosyltransferase family.

The chain is UDP-glycosyltransferase 72C1 (UGT72C1) from Arabidopsis thaliana (Mouse-ear cress).